Reading from the N-terminus, the 158-residue chain is NAD(P)H-quinone oxidoreductase subunit J, chloroplastic (158 aa).

Belongs to the complex I 30 kDa subunit family. In terms of assembly, NDH is composed of at least 16 different subunits, 5 of which are encoded in the nucleus.

It is found in the plastid. The protein localises to the chloroplast thylakoid membrane. It carries out the reaction a plastoquinone + NADH + (n+1) H(+)(in) = a plastoquinol + NAD(+) + n H(+)(out). The catalysed reaction is a plastoquinone + NADPH + (n+1) H(+)(in) = a plastoquinol + NADP(+) + n H(+)(out). NDH shuttles electrons from NAD(P)H:plastoquinone, via FMN and iron-sulfur (Fe-S) centers, to quinones in the photosynthetic chain and possibly in a chloroplast respiratory chain. The immediate electron acceptor for the enzyme in this species is believed to be plastoquinone. Couples the redox reaction to proton translocation, and thus conserves the redox energy in a proton gradient. In Coffea arabica (Arabian coffee), this protein is NAD(P)H-quinone oxidoreductase subunit J, chloroplastic.